We begin with the raw amino-acid sequence, 341 residues long: S-adenosylmethionine:tRNA ribosyltransferase-isomerase (341 aa).

Belongs to the QueA family. Monomer.

It is found in the cytoplasm. The enzyme catalyses 7-aminomethyl-7-carbaguanosine(34) in tRNA + S-adenosyl-L-methionine = epoxyqueuosine(34) in tRNA + adenine + L-methionine + 2 H(+). Its pathway is tRNA modification; tRNA-queuosine biosynthesis. Functionally, transfers and isomerizes the ribose moiety from AdoMet to the 7-aminomethyl group of 7-deazaguanine (preQ1-tRNA) to give epoxyqueuosine (oQ-tRNA). This is S-adenosylmethionine:tRNA ribosyltransferase-isomerase from Clostridium perfringens (strain SM101 / Type A).